The sequence spans 278 residues: Hydroxyethylthiazole kinase (278 aa).

Residue Met-46 coordinates substrate. ATP-binding residues include Arg-122 and Thr-168. A substrate-binding site is contributed by Gly-195.

This sequence belongs to the Thz kinase family. Mg(2+) serves as cofactor.

The enzyme catalyses 5-(2-hydroxyethyl)-4-methylthiazole + ATP = 4-methyl-5-(2-phosphooxyethyl)-thiazole + ADP + H(+). It functions in the pathway cofactor biosynthesis; thiamine diphosphate biosynthesis; 4-methyl-5-(2-phosphoethyl)-thiazole from 5-(2-hydroxyethyl)-4-methylthiazole: step 1/1. In terms of biological role, catalyzes the phosphorylation of the hydroxyl group of 4-methyl-5-beta-hydroxyethylthiazole (THZ). In Chloroflexus aggregans (strain MD-66 / DSM 9485), this protein is Hydroxyethylthiazole kinase.